The following is a 203-amino-acid chain: tRNA (pseudouridine(54)-N(1))-methyltransferase (203 aa).

S-adenosyl-L-methionine is bound by residues L125, G146, and C179.

Belongs to the methyltransferase superfamily. TrmY family. In terms of assembly, homodimer.

Its subcellular location is the cytoplasm. It catalyses the reaction pseudouridine(54) in tRNA + S-adenosyl-L-methionine = N(1)-methylpseudouridine(54) in tRNA + S-adenosyl-L-homocysteine + H(+). In terms of biological role, specifically catalyzes the N1-methylation of pseudouridine at position 54 (Psi54) in tRNAs. In Methanopyrus kandleri (strain AV19 / DSM 6324 / JCM 9639 / NBRC 100938), this protein is tRNA (pseudouridine(54)-N(1))-methyltransferase.